Here is a 105-residue protein sequence, read N- to C-terminus: UPF0148 protein PH0795 (105 aa).

Belongs to the UPF0148 family.

The sequence is that of UPF0148 protein PH0795 from Pyrococcus horikoshii (strain ATCC 700860 / DSM 12428 / JCM 9974 / NBRC 100139 / OT-3).